The primary structure comprises 787 residues: PAN2-PAN3 deadenylation complex subunit pan3 (787 aa).

The tract at residues 1–20 (MNSGLTPSPSPAVAAAGPAG) is disordered. Positions 11 to 20 (PAVAAAGPAG) are enriched in low complexity. The C3H1-type zinc-finger motif lies at 23–51 (GSKLKFCRYYAKDRTCFYGDECQFLHDDQ). 3 disordered regions span residues 131–162 (EATY…AAHD), 179–210 (TMSQ…MSQS), and 226–291 (GGPT…PPST). Composition is skewed to low complexity over residues 143 to 154 (NSSSSPSLLNDS) and 200 to 210 (STSRLSNMSQS). Positions 185–200 (KTPNPTASEFIPKGGS) match the PABPC-interacting motif-2 (PAM-2) motif. Polar residues predominate over residues 265-290 (TPNPANYMVPTSASTPVTNSVSQPPS). The tract at residues 365–650 (QIDQADMPGV…SVNDIMPMIG (286 aa)) is pseudokinase domain. Residues arginine 422, 471–478 (DFHAGSET), and 545–546 (TK) each bind ATP. A coiled-coil region spans residues 651–689 (ARFYTQLDAAQMRNDVIEEDLAKEVQNGRLFRLLAKLGT). Residues 690–787 (INERPEFQKD…ELVAAANGQL (98 aa)) form a knob domain region.

This sequence belongs to the protein kinase superfamily. PAN3 family. As to quaternary structure, homodimer. Forms a heterotrimer with a catalytic subunit pan2 to form the poly(A)-nuclease (PAN) deadenylation complex. Interacts (via PAM-2 motif) with poly(A)-binding protein pabpc1 (via PABC domain), conferring substrate specificity of the enzyme complex. Interacts with the GW182 family proteins tnrc6a, tnrc6b and tnrc6c.

It localises to the cytoplasm. The protein resides in the P-body. Regulatory subunit of the poly(A)-nuclease (PAN) deadenylation complex, one of two cytoplasmic mRNA deadenylases involved in general and miRNA-mediated mRNA turnover. PAN specifically shortens poly(A) tails of RNA and the activity is stimulated by poly(A)-binding protein (PABP). PAN deadenylation is followed by rapid degradation of the shortened mRNA tails by the CCR4-NOT complex. Deadenylated mRNAs are then degraded by two alternative mechanisms, namely exosome-mediated 3'-5' exonucleolytic degradation, or deadenylation-dependent mRNA decaping and subsequent 5'-3' exonucleolytic degradation by XRN1. PAN3 acts as a positive regulator for PAN activity, recruiting the catalytic subunit PAN2 to mRNA via its interaction with RNA and PABP, and to miRNA targets via its interaction with GW182 family proteins. This is PAN2-PAN3 deadenylation complex subunit pan3 from Xenopus tropicalis (Western clawed frog).